Reading from the N-terminus, the 644-residue chain is Exoribonuclease 2 (644 aa).

The RNB domain occupies 189–516; it reads REDLTALDFV…NHRLLKAVIK (328 aa). The S1 motif domain maps to 561–643; it reads DTRFAAEIVD…ETRSIIARPV (83 aa).

This sequence belongs to the RNR ribonuclease family. RNase II subfamily.

It localises to the cytoplasm. The catalysed reaction is Exonucleolytic cleavage in the 3'- to 5'-direction to yield nucleoside 5'-phosphates.. Involved in mRNA degradation. Hydrolyzes single-stranded polyribonucleotides processively in the 3' to 5' direction. The polypeptide is Exoribonuclease 2 (Escherichia coli O17:K52:H18 (strain UMN026 / ExPEC)).